We begin with the raw amino-acid sequence, 184 residues long: Peptide deformylase (184 aa).

2 residues coordinate Fe cation: C92 and H134. E135 is an active-site residue. Position 138 (H138) interacts with Fe cation.

Belongs to the polypeptide deformylase family. It depends on Fe(2+) as a cofactor.

It catalyses the reaction N-terminal N-formyl-L-methionyl-[peptide] + H2O = N-terminal L-methionyl-[peptide] + formate. Removes the formyl group from the N-terminal Met of newly synthesized proteins. Requires at least a dipeptide for an efficient rate of reaction. N-terminal L-methionine is a prerequisite for activity but the enzyme has broad specificity at other positions. The chain is Peptide deformylase from Psychrobacter cryohalolentis (strain ATCC BAA-1226 / DSM 17306 / VKM B-2378 / K5).